The sequence spans 1236 residues: DNA-directed RNA polymerase subunit beta (1236 aa).

A disordered region spans residues 1193 to 1212; the sequence is PDVLDDDSYDQNNDEDIDEI. Acidic residues predominate over residues 1194–1212; the sequence is DVLDDDSYDQNNDEDIDEI.

Belongs to the RNA polymerase beta chain family. As to quaternary structure, the RNAP catalytic core consists of 2 alpha, 1 beta, 1 beta' and 1 omega subunit. When a sigma factor is associated with the core the holoenzyme is formed, which can initiate transcription.

It carries out the reaction RNA(n) + a ribonucleoside 5'-triphosphate = RNA(n+1) + diphosphate. Functionally, DNA-dependent RNA polymerase catalyzes the transcription of DNA into RNA using the four ribonucleoside triphosphates as substrates. The sequence is that of DNA-directed RNA polymerase subunit beta from Clostridium beijerinckii (strain ATCC 51743 / NCIMB 8052) (Clostridium acetobutylicum).